Consider the following 335-residue polypeptide: MDVRVGGKYRLGRKIGSGSFGDIYLGTNISTGDEVAIKLESVRSRHPQLIYESKLYKILTGGIGIPTLYWYGIEGDYNVMIIELLGPSLEDLFSICNRKLSLKTVLMLADQMLNRIEFVHSRHFIHRDIKPDNFLIGRGKKMSIVFAIDFGLAKKYRDPRTQSHIPYREGKNLTGTARYASVNTHLGIEQSRRDDLEALGYVLMYFNRGSLPWQGLKATTKKDKYDKIMEKKMSTPIEVLCKQFPFEFITYLNYCRSLRFEDRPDYSYLRRLFKDLFFREGYQYDFIFDWTFLHAERERERQRRSMVNQGAESGNQWRRDASGRDPLGRLPQLEP.

Residues 9 to 278 (YRLGRKIGSG…LRRLFKDLFF (270 aa)) enclose the Protein kinase domain. ATP-binding positions include 15-23 (IGSGSFGDI) and K38. Catalysis depends on D128, which acts as the Proton acceptor. The disordered stretch occupies residues 304–335 (RSMVNQGAESGNQWRRDASGRDPLGRLPQLEP). Polar residues predominate over residues 305 to 316 (SMVNQGAESGNQ). The span at 317-327 (WRRDASGRDPL) shows a compositional bias: basic and acidic residues.

Belongs to the protein kinase superfamily. CK1 Ser/Thr protein kinase family. Casein kinase I subfamily.

It catalyses the reaction L-seryl-[protein] + ATP = O-phospho-L-seryl-[protein] + ADP + H(+). The enzyme catalyses L-threonyl-[protein] + ATP = O-phospho-L-threonyl-[protein] + ADP + H(+). Casein kinases are operationally defined by their preferential utilization of acidic proteins such as caseins as substrates. It can phosphorylate a large number of proteins. The polypeptide is Casein kinase I (Eimeria tenella (Coccidian parasite)).